Consider the following 612-residue polypeptide: Dihydroxy-acid dehydratase (612 aa).

D81 is a Mg(2+) binding site. Position 122 (C122) interacts with [2Fe-2S] cluster. Residues D123 and K124 each coordinate Mg(2+). K124 is modified (N6-carboxylysine). C195 contacts [2Fe-2S] cluster. Position 491 (E491) interacts with Mg(2+). S517 (proton acceptor) is an active-site residue.

It belongs to the IlvD/Edd family. As to quaternary structure, homodimer. [2Fe-2S] cluster is required as a cofactor. Mg(2+) serves as cofactor.

It carries out the reaction (2R)-2,3-dihydroxy-3-methylbutanoate = 3-methyl-2-oxobutanoate + H2O. The catalysed reaction is (2R,3R)-2,3-dihydroxy-3-methylpentanoate = (S)-3-methyl-2-oxopentanoate + H2O. Its pathway is amino-acid biosynthesis; L-isoleucine biosynthesis; L-isoleucine from 2-oxobutanoate: step 3/4. The protein operates within amino-acid biosynthesis; L-valine biosynthesis; L-valine from pyruvate: step 3/4. Functionally, functions in the biosynthesis of branched-chain amino acids. Catalyzes the dehydration of (2R,3R)-2,3-dihydroxy-3-methylpentanoate (2,3-dihydroxy-3-methylvalerate) into 2-oxo-3-methylpentanoate (2-oxo-3-methylvalerate) and of (2R)-2,3-dihydroxy-3-methylbutanoate (2,3-dihydroxyisovalerate) into 2-oxo-3-methylbutanoate (2-oxoisovalerate), the penultimate precursor to L-isoleucine and L-valine, respectively. This Rhizobium johnstonii (strain DSM 114642 / LMG 32736 / 3841) (Rhizobium leguminosarum bv. viciae) protein is Dihydroxy-acid dehydratase.